The sequence spans 233 residues: uncharacterized protein (233 aa).

3 helical membrane passes run 78–98 (FCLI…PVMY), 113–133 (FITC…LFKL), and 188–208 (FLLI…YGTI).

It localises to the membrane. This is an uncharacterized protein from Saccharomyces cerevisiae (strain ATCC 204508 / S288c) (Baker's yeast).